The primary structure comprises 212 residues: Ribonuclease HII (212 aa).

Residues 12–201 (ELVAGVDEVG…VRAMLEQVSI (190 aa)) enclose the RNase H type-2 domain. Residues Asp18, Glu19, and Asp110 each contribute to the a divalent metal cation site.

Belongs to the RNase HII family. Mn(2+) serves as cofactor. It depends on Mg(2+) as a cofactor.

It is found in the cytoplasm. The enzyme catalyses Endonucleolytic cleavage to 5'-phosphomonoester.. In terms of biological role, endonuclease that specifically degrades the RNA of RNA-DNA hybrids. The chain is Ribonuclease HII from Stutzerimonas stutzeri (strain A1501) (Pseudomonas stutzeri).